The chain runs to 876 residues: Valine--tRNA ligase (876 aa).

Positions 44–54 (PNVTGKLHLGH) match the 'HIGH' region motif. The 'KMSKS' region signature appears at 520-524 (KMSKS). Position 523 (Lys523) interacts with ATP. Residues 805–876 (LEGLIDMDKE…VKARIEQLKA (72 aa)) adopt a coiled-coil conformation.

The protein belongs to the class-I aminoacyl-tRNA synthetase family. ValS type 1 subfamily. In terms of assembly, monomer.

The protein localises to the cytoplasm. It catalyses the reaction tRNA(Val) + L-valine + ATP = L-valyl-tRNA(Val) + AMP + diphosphate. In terms of biological role, catalyzes the attachment of valine to tRNA(Val). As ValRS can inadvertently accommodate and process structurally similar amino acids such as threonine, to avoid such errors, it has a 'posttransfer' editing activity that hydrolyzes mischarged Thr-tRNA(Val) in a tRNA-dependent manner. This Staphylococcus aureus (strain Mu3 / ATCC 700698) protein is Valine--tRNA ligase.